Here is a 413-residue protein sequence, read N- to C-terminus: Methylaspartate ammonia-lyase (413 aa).

Position 172 (Gln-172) interacts with (2S,3S)-3-methyl-L-aspartate. The Mg(2+) site is built by Asp-238, Glu-273, and Asp-307. (2S,3S)-3-methyl-L-aspartate is bound at residue Gln-329. The Proton acceptor role is filled by Lys-331. Residues 360–361 (TC) and Cys-361 contribute to the (2S,3S)-3-methyl-L-aspartate site.

Belongs to the methylaspartate ammonia-lyase family. Homodimer. Mg(2+) is required as a cofactor.

The catalysed reaction is (2S,3S)-3-methyl-L-aspartate = mesaconate + NH4(+). The protein operates within amino-acid degradation; L-glutamate degradation via mesaconate pathway; acetate and pyruvate from L-glutamate: step 2/4. Inhibited by calcium ions. Functionally, involved in the methylaspartate cycle. Catalyzes the formation of the alpha,beta-unsaturated bond by the reversible anti elimination of ammonia from L-threo-beta-methylaspartate (L-threo-(2S,3S)-3-methylaspartate) to give mesaconate. It can also use L-erythro-beta-methylaspartate (L-erythro-(2S,3R)-3-methylaspartate), L-aspartate, fumarate and ethylfumarate as substrates. In Clostridium tetanomorphum, this protein is Methylaspartate ammonia-lyase.